The sequence spans 145 residues: Male-specific protein scotti (145 aa).

The tract at residues 1 to 34 (MANNRLMPEGQIIEEDMDGEDQNARELDIDDDDD) is disordered. Over residues 12–21 (IIEEDMDGED) the composition is skewed to acidic residues.

The protein belongs to the male-specific scotti family.

Its function is as follows. Post-meiotically transcribed gene that has a role in late spermiogenesis; required for actin cone progression during spermatid individualization. The protein is Male-specific protein scotti of Drosophila willistoni (Fruit fly).